The following is a 409-amino-acid chain: Probable type I inositol 1,4,5-trisphosphate 5-phosphatase (409 aa).

The protein belongs to the inositol 1,4,5-trisphosphate 5-phosphatase type I family.

The enzyme catalyses 1D-myo-inositol 1,4,5-trisphosphate + H2O = 1D-myo-inositol 1,4-bisphosphate + phosphate. It carries out the reaction 1D-myo-inositol 1,3,4,5-tetrakisphosphate + H2O = 1D-myo-inositol 1,3,4-trisphosphate + phosphate. This Caenorhabditis elegans protein is Probable type I inositol 1,4,5-trisphosphate 5-phosphatase (ipp-5).